The primary structure comprises 438 residues: 23S rRNA (uracil(1939)-C(5))-methyltransferase RlmD (438 aa).

One can recognise a TRAM domain in the interval 11–69 (LQPESKHQQVLVEKLDHQGAGIAYLNKKPLFIDGTLPGEEVVTQLTESKSKFARGKLIK). 4 residues coordinate [4Fe-4S] cluster: Cys82, Cys88, Cys91, and Cys169. S-adenosyl-L-methionine-binding residues include Gln272, Phe301, Asn306, Glu322, Asn349, and Asp370. Cys396 (nucleophile) is an active-site residue.

It belongs to the class I-like SAM-binding methyltransferase superfamily. RNA M5U methyltransferase family. RlmD subfamily.

The catalysed reaction is uridine(1939) in 23S rRNA + S-adenosyl-L-methionine = 5-methyluridine(1939) in 23S rRNA + S-adenosyl-L-homocysteine + H(+). Catalyzes the formation of 5-methyl-uridine at position 1939 (m5U1939) in 23S rRNA. In Vibrio vulnificus (strain CMCP6), this protein is 23S rRNA (uracil(1939)-C(5))-methyltransferase RlmD.